Consider the following 216-residue polypeptide: Small ribosomal subunit protein uS3 (216 aa).

The KH type-2 domain occupies 24-93; the sequence is IKEFLEYRLA…NPQIDVIDVS (70 aa).

It belongs to the universal ribosomal protein uS3 family. In terms of assembly, part of the 30S ribosomal subunit.

In terms of biological role, binds the lower part of the 30S subunit head. The chain is Small ribosomal subunit protein uS3 from Pyrobaculum calidifontis (strain DSM 21063 / JCM 11548 / VA1).